A 495-amino-acid polypeptide reads, in one-letter code: RuBisCO large subunit-binding protein subunit alpha (495 aa).

Belongs to the chaperonin (HSP60) family. Oligomer of probably six alpha and six beta subunits.

It localises to the plastid. It is found in the chloroplast. This protein binds RuBisCO small and large subunits and is implicated in the assembly of the enzyme oligomer. The chain is RuBisCO large subunit-binding protein subunit alpha from Ricinus communis (Castor bean).